The sequence spans 267 residues: Orotidine 5'-phosphate decarboxylase (267 aa).

Residues D37, 59 to 61 (KTH), 91 to 100 (DRKFADIGNT), Y217, and R235 each bind substrate. The active-site Proton donor is the K93.

It belongs to the OMP decarboxylase family.

It catalyses the reaction orotidine 5'-phosphate + H(+) = UMP + CO2. It participates in pyrimidine metabolism; UMP biosynthesis via de novo pathway; UMP from orotate: step 2/2. The polypeptide is Orotidine 5'-phosphate decarboxylase (URA3) (Eremothecium gossypii (strain ATCC 10895 / CBS 109.51 / FGSC 9923 / NRRL Y-1056) (Yeast)).